The chain runs to 195 residues: Phenoloxidase subunit 1 (195 aa).

His-10 serves as a coordination point for Cu cation. Residues Asn-77, Asn-97, and Asn-98 are each glycosylated (N-linked (GlcNAc...) asparagine).

This sequence belongs to the tyrosinase family. Heterodimer. Requires Cu(2+) as cofactor.

It localises to the secreted. The enzyme catalyses 2 L-dopa + O2 = 2 L-dopaquinone + 2 H2O. It carries out the reaction L-tyrosine + O2 = L-dopaquinone + H2O. In terms of biological role, this is a copper-containing oxidase that functions in the formation of pigments such as melanins and other polyphenolic compounds. Catalyzes the rate-limiting conversions of tyrosine to DOPA, DOPA to DOPA-quinone and possibly 5,6 dihydroxyindole to indole-5'6 quinone. In Simulium damnosum (Black fly), this protein is Phenoloxidase subunit 1.